A 249-amino-acid chain; its full sequence is Triosephosphate isomerase (249 aa).

Residues Asn12 and Lys14 each coordinate substrate. An N6-acetyllysine modification is found at Lys14. Tyr68 is modified (3'-nitrotyrosine). Ser80 carries the phosphoserine modification. His96 (electrophile) is an active-site residue. At Ser106 the chain carries Phosphoserine. Residue Lys142 forms a Glycyl lysine isopeptide (Lys-Gly) (interchain with G-Cter in SUMO1) linkage. Lys149 is modified (N6-succinyllysine). The residue at position 156 (Lys156) is an N6-acetyllysine; alternate. Lys156 is modified (N6-succinyllysine; alternate). Ser159 carries the post-translational modification Phosphoserine. Glu166 (proton acceptor) is an active-site residue. A Phosphothreonine modification is found at Thr173. Lys194 is subject to N6-acetyllysine; alternate. Lys194 is subject to N6-succinyllysine; alternate. Lys194 carries the post-translational modification N6-methyllysine; alternate. At Ser198 the chain carries Phosphoserine. At Tyr209 the chain carries 3'-nitrotyrosine. The residue at position 212 (Ser212) is a Phosphoserine. Thr214 is modified (phosphothreonine). Position 223 is a phosphoserine (Ser223). Position 238 is an N6-acetyllysine (Lys238).

It belongs to the triosephosphate isomerase family. Homodimer.

Its subcellular location is the cytoplasm. It catalyses the reaction dihydroxyacetone phosphate = methylglyoxal + phosphate. The enzyme catalyses D-glyceraldehyde 3-phosphate = dihydroxyacetone phosphate. Its pathway is carbohydrate degradation; glycolysis; D-glyceraldehyde 3-phosphate from glycerone phosphate: step 1/1. It participates in carbohydrate biosynthesis; gluconeogenesis. In terms of biological role, triosephosphate isomerase is an extremely efficient metabolic enzyme that catalyzes the interconversion between dihydroxyacetone phosphate (DHAP) and D-glyceraldehyde-3-phosphate (G3P) in glycolysis and gluconeogenesis. Functionally, it is also responsible for the non-negligible production of methylglyoxal a reactive cytotoxic side-product that modifies and can alter proteins, DNA and lipids. This Gorilla gorilla gorilla (Western lowland gorilla) protein is Triosephosphate isomerase (TPI1).